A 570-amino-acid polypeptide reads, in one-letter code: High-affinity hexose transporter HXT7 (570 aa).

At 1–60 (MSQDAAIAEQTPVEHLSAVDSASHSVLSTPSNKAERDEIKAYGEGEEHEPVVEIPKRPAS) the chain is on the cytoplasmic side. The helical transmembrane segment at 61–81 (AYVTVSIMCIMIAFGGFVFGW) threads the bilayer. The Extracellular segment spans residues 82–116 (DTGTISGFINQTDFIRRFGMKHKDGTNYLSKVRTG). Asparagine 91 is a glycosylation site (N-linked (GlcNAc...) asparagine). A helical transmembrane segment spans residues 117 to 137 (LIVSIFNIGCAIGGIILSKLG). Over 138–143 (DMYGRK) the chain is Cytoplasmic. The chain crosses the membrane as a helical span at residues 144-164 (VGLIVVVVIYIIGIIIQIASI). Residues 165-174 (NKWYQYFIGR) lie on the Extracellular side of the membrane. A helical transmembrane segment spans residues 175 to 195 (IISGLGVGGIAVLSPMLISEV). Topologically, residues 196–201 (SPKHLR) are cytoplasmic. A helical transmembrane segment spans residues 202–222 (GTLVSCYQLMITAGIFLGYCT). Residues 223-236 (NFGTKNYSNSVQWR) are Extracellular-facing. Asparagine 228 is a glycosylation site (N-linked (GlcNAc...) asparagine). Residues 237 to 257 (VPLGLCFAWALFMIGGMTFVP) traverse the membrane as a helical segment. The Cytoplasmic portion of the chain corresponds to 258–340 (ESPRYLAEVG…IQSLQQLTGD (83 aa)). The chain crosses the membrane as a helical span at residues 341 to 357 (NYFFYYGTTIFKAVGLS). At 358–363 (DSFETS) the chain is on the extracellular side. A helical membrane pass occupies residues 364-381 (IVLGIVNFASTFVGIYVV). The Cytoplasmic portion of the chain corresponds to 382–388 (ERYGRRT). A helical transmembrane segment spans residues 389–409 (CLLWGAASMTACMVVYASVGV). Over 410 to 431 (TRLWPNGQDQPSSKGAGNCMIV) the chain is Extracellular. A helical membrane pass occupies residues 432-452 (FACFYIFCFATTWAPIPYVVV). Residues 453–469 (SETFPLRVKSKAMSIAT) lie on the Cytoplasmic side of the membrane. Residues 470–490 (AANWLWGFLIGFFTPFITGAI) form a helical membrane-spanning segment. Asparagine 491 is a topological domain (extracellular). A helical transmembrane segment spans residues 492 to 512 (FYYGYVFMGCLVFMFFYVLLV). At 513-570 (VPETKGLTLEEVNTMWEEGVLPWKSASWVPPSRRGANYDAEEMTHDDKPLYKRMFSTK) the chain is on the cytoplasmic side. Phosphothreonine is present on threonine 556. Residue lysine 560 forms a Glycyl lysine isopeptide (Lys-Gly) (interchain with G-Cter in ubiquitin) linkage.

This sequence belongs to the major facilitator superfamily. Sugar transporter (TC 2.A.1.1) family.

Its subcellular location is the membrane. In terms of biological role, high-affinity glucose transporter. The polypeptide is High-affinity hexose transporter HXT7 (HXT7) (Saccharomyces cerevisiae (strain ATCC 204508 / S288c) (Baker's yeast)).